Consider the following 890-residue polypeptide: DNA mismatch repair protein MutS (890 aa).

ATP is bound at residue 645–652 (GPNMAGKS).

Belongs to the DNA mismatch repair MutS family.

Functionally, this protein is involved in the repair of mismatches in DNA. It is possible that it carries out the mismatch recognition step. This protein has a weak ATPase activity. This Rickettsia africae (strain ESF-5) protein is DNA mismatch repair protein MutS.